A 1146-amino-acid polypeptide reads, in one-letter code: MFNIKKRKESITGIPPINVNSPQSVPLSGTLQSPLITPNSPNFVSRQCPFKKFGCSSFLVSKAEFDNHLKDDAQFHLQLAVEKFDHQFDLHTQLMAHFTEQMEDQLEKTMKVVRNHTDSLGGNVQTKLDEGIEKCMAFAKKVEQQQQQLAKRLITQQIQEKKSTSSPLVKGGISGGGGSGGDDSFDGANISSMSTSKQELQQELQSLSIKMKKELTELSDELSQKLERSTGNIDIKIKRIEGEVNEKIDKRQLVSTIDDSIGKKTDSIGYTLESSIIKKVEEKEKKKSEQNQLLFDSKIESLKDKIKIIETQQLDTSSEVRKLKLESTSSGNLMAGLNGTSGRPSSSSHFIPSSVSAAANNINKNEIMEEVKKVEEKLQKKIREEIDNTKSELSKVERSVKDNRSEIEGLEKDCKNQFDKQDNKIKQVEDDLKKSDSLLLLMQNNLKKYNEFVDRERDRESERLKLQDSIKRLEQNQKKIEAEIQEGNEQVERVLREEASISPISSVPKSPITTKRSSIILNSPPMTSQQSSPKIQDLLSSSGSSSVSGINISSETGEMGILWEFDPIINKWIRLSMKLKVERKPFAEGALREAYHTVSLGVGTDENYPLGTTTKLFPPIEMISPISKNNEAMTQLKNGTKFVLKLYKKEAEQQASRELYFEDVKMQMVCRDWGNKFNQKKPPKKIEFLMSWVVELIDRSPSSNGQPILCSIEPLLVGEFKKNNSNYGAVLTNRSTPQAFSHFTYELSNKQMIVVDIQGVDDLYTDPQIHTPDGKGFGLGNLGKAGINKFITTHKCNAVCALLDLDVKLGGVLSGNNKKQLQQGTMVMPDILPELMPSDNTIKVGAKQLPKAEFSKKDLKCVSTIQSFRERVNSIAFFDNQKLLCAGYGDGTYRVFDVNDNWKCLYTVNGHRKSIESIACNSNYIFTSSPDNTIKVHIIRSGNTKCIETLVGHTGEVNCVVANEKYLFSCSYDKTIKVWDLSTFKEIKSFEGVHTKYIKTLALSGRYLFSGGNDQIIYVWDTETLSMLFNMQGHEDWVLSLHCTASYLFSTSKDNVIKIWDLSNFSCIDTLKGHWNSVSSCVVKDRYLYSGSEDNSIKVWDLDTLECVYTIPKSHSLGVKCLMVFNNQIISAAFDGSIKVWEWQSK.

Positions 1–25 (MFNIKKRKESITGIPPINVNSPQSV) are disordered. Positions 100–120 (EQMEDQLEKTMKVVRNHTDSL) form a coiled coil. The disordered stretch occupies residues 158-191 (IQEKKSTSSPLVKGGISGGGGSGGDDSFDGANIS). Gly residues predominate over residues 172 to 181 (GISGGGGSGG). Coiled coils occupy residues 187–241 (GANI…KRIE) and 297–502 (SKIE…ASIS). Residues 500 to 551 (SISPISSVPKSPITTKRSSIILNSPPMTSQQSSPKIQDLLSSSGSSSVSGIN) form a pseudosubstrate/autoinhibitory domain region. The span at 521-534 (LNSPPMTSQQSSPK) shows a compositional bias: polar residues. The interval 521–540 (LNSPPMTSQQSSPKIQDLLS) is disordered. The interval 552-852 (ISSETGEMGI…KVGAKQLPKA (301 aa)) is catalytic. Positions 564-808 (EFDPIINKWI…VCALLDLDVK (245 aa)) constitute an Alpha-type protein kinase domain. Residue 778–783 (GLGNLG) coordinates ATP. WD repeat units follow at residues 867–897 (SFRE…RVFD), 910–938 (GHRK…KVHI), 952–980 (GHTG…KVWD), 993–1021 (VHTK…YVWD), 1033–1061 (GHED…KIWD), 1073–1101 (GHWN…KVWD), and 1114–1142 (SHSL…KVWE).

The protein belongs to the protein kinase superfamily. Alpha-type protein kinase family. ALPK subfamily. In terms of assembly, oligomer. Requires Mg(2+) as cofactor. Mn(2+) serves as cofactor. In terms of processing, the N-terminus is blocked.

The enzyme catalyses L-threonyl-[myosin heavy-chain] + ATP = O-phospho-L-threonyl-[myosin heavy-chain] + ADP + H(+). Catalyzes its autophosphorylation, which is needed for enzymatic activity and phosphorylates myosin II heavy chain at a threonine in the C-terminal tail region. This phosphorylation is critical for regulating the assembly and disassembly of myosin II filament, affecting myosin localization during an array of cellular contractile events, including cytokinesis and capping of cell surface receptors as well as chemotactic cell locomotion. The protein is Myosin heavy chain kinase A (mhkA) of Dictyostelium discoideum (Social amoeba).